The sequence spans 348 residues: MEKAENEKKPSAVSDVGAWAMNVTSSVGIIMANKQLMSSSGFGFSFATTLTGFHFALTALVGMVSNATGLSASKHVPLWELLWFSLVANISIAAMNFSLMLNSVGFYQISKLSMIPVVCVMEWVLHSKHYSREVKASVMVVVVGVGICTVTDVKVNAKGFICACTAVFSTSLQQISIGSLQKKYSIGSFELLSKTAPIQAISLLIFGPFVDYFLSGRFISTYKMTYSAMLCILLSCALAVFCNISQYLCIGRFSATSFQVLGHMKTVCVLTLGWLIFDSEMTFKNIAGMVLAVVGMVIYSWAVELEKQRKSKVIPHGKHSMTEDEIKLLKEGIEHMDLKDMELGNNKA.

The next 10 membrane-spanning stretches (helical) occupy residues 12 to 32 (AVSD…IIMA), 44 to 64 (FSFA…VGMV), 81 to 101 (LLWF…SLML), 104 to 124 (VGFY…MEWV), 133 to 153 (EVKA…VTDV), 160 to 180 (FICA…IGSL), 196 to 216 (APIQ…FLSG), 230 to 250 (LCIL…YLCI), 257 to 277 (SFQV…WLIF), and 286 to 306 (IAGM…VELE).

Belongs to the TPT transporter family. TPT (TC 2.A.7.9) subfamily.

The protein resides in the golgi apparatus membrane. In terms of biological role, nucleotide-sugar transporter that transports UDP-rhamnose or UDP-galactose and UMP in a strict counter-exchange mode. In Arabidopsis thaliana (Mouse-ear cress), this protein is UDP-rhamnose/UDP-galactose transporter 2.